The primary structure comprises 1095 residues: 1-phosphatidylinositol 4,5-bisphosphate phosphodiesterase (1095 aa).

One can recognise a PI-PLC X-box domain in the interval 319 to 469; sequence MEMDQPLAHY…LKRKILIKNK (151 aa). Catalysis depends on residues H334 and H381. Residues K467 and K469 each coordinate substrate. Residues 487–529 form a disordered region; the sequence is ELKTDDDPEEDASAGKPPEAAAAPAPAPEAAAAAEGAAEGGGG. Residues 500–523 show a composition bias toward low complexity; that stretch reads AGKPPEAAAAPAPAPEAAAAAEGA. Residues 550-666 form the PI-PLC Y-box domain; it reads LSSMVNYAQP…GYLLKPDFMR (117 aa). Substrate-binding residues include S579 and R606. The C2 domain maps to 666-794; the sequence is RRADKDFDPF…SLRTEANFPM (129 aa). 2 disordered regions span residues 842–863 and 1000–1030; these read IEEQ…EKKE and QAKM…LREK. Basic and acidic residues-rich tracts occupy residues 852–863 and 1007–1030; these read DAGKAKEEEKKE and TAKE…LREK.

In terms of assembly, interacts with inaD. In terms of tissue distribution, abundantly expressed in the adult retina.

It catalyses the reaction a 1,2-diacyl-sn-glycero-3-phospho-(1D-myo-inositol-4,5-bisphosphate) + H2O = 1D-myo-inositol 1,4,5-trisphosphate + a 1,2-diacyl-sn-glycerol + H(+). The production of the second messenger molecules diacylglycerol (DAG) and inositol 1,4,5-trisphosphate (IP3) is mediated by activated phosphatidylinositol-specific phospholipase C enzymes. Essential component of the phototransduction pathway. Essential downstream component of a hh-signaling pathway which regulates the Duox-dependent gut immune response to bacterial uracil; required for the activation of Cad99C and consequently Cad99C-dependent endosome formation, which is essential for the Duox-dependent production of reactive oxygen species (ROS) in response to intestinal bacterial infection. In Drosophila melanogaster (Fruit fly), this protein is 1-phosphatidylinositol 4,5-bisphosphate phosphodiesterase.